The chain runs to 248 residues: 4-hydroxy-tetrahydrodipicolinate reductase (248 aa).

13–18 (GITGRL) provides a ligand contact to NAD(+). Arg36 contacts NADP(+). NAD(+) contacts are provided by residues 84 to 86 (GTT) and 108 to 111 (AANF). The active-site Proton donor/acceptor is the His140. Residue His141 coordinates (S)-2,3,4,5-tetrahydrodipicolinate. Lys144 acts as the Proton donor in catalysis. Position 150-151 (150-151 (GT)) interacts with (S)-2,3,4,5-tetrahydrodipicolinate.

The protein belongs to the DapB family.

The protein localises to the cytoplasm. It catalyses the reaction (S)-2,3,4,5-tetrahydrodipicolinate + NAD(+) + H2O = (2S,4S)-4-hydroxy-2,3,4,5-tetrahydrodipicolinate + NADH + H(+). The catalysed reaction is (S)-2,3,4,5-tetrahydrodipicolinate + NADP(+) + H2O = (2S,4S)-4-hydroxy-2,3,4,5-tetrahydrodipicolinate + NADPH + H(+). The protein operates within amino-acid biosynthesis; L-lysine biosynthesis via DAP pathway; (S)-tetrahydrodipicolinate from L-aspartate: step 4/4. Catalyzes the conversion of 4-hydroxy-tetrahydrodipicolinate (HTPA) to tetrahydrodipicolinate. The protein is 4-hydroxy-tetrahydrodipicolinate reductase of Gluconobacter oxydans (strain 621H) (Gluconobacter suboxydans).